The following is an 880-amino-acid chain: Alanine--tRNA ligase (880 aa).

Positions 567, 571, 669, and 673 each coordinate Zn(2+).

Belongs to the class-II aminoacyl-tRNA synthetase family. Requires Zn(2+) as cofactor.

The protein resides in the cytoplasm. The enzyme catalyses tRNA(Ala) + L-alanine + ATP = L-alanyl-tRNA(Ala) + AMP + diphosphate. In terms of biological role, catalyzes the attachment of alanine to tRNA(Ala) in a two-step reaction: alanine is first activated by ATP to form Ala-AMP and then transferred to the acceptor end of tRNA(Ala). Also edits incorrectly charged Ser-tRNA(Ala) and Gly-tRNA(Ala) via its editing domain. In Syntrophomonas wolfei subsp. wolfei (strain DSM 2245B / Goettingen), this protein is Alanine--tRNA ligase.